The following is a 555-amino-acid chain: Hydroxylamine reductase (555 aa).

Residues C3, C6, C18, and C25 each coordinate [4Fe-4S] cluster. Hybrid [4Fe-2O-2S] cluster-binding residues include H252, E276, C320, C407, C435, C460, E494, and K496. C407 is modified (cysteine persulfide).

This sequence belongs to the HCP family. [4Fe-4S] cluster serves as cofactor. It depends on hybrid [4Fe-2O-2S] cluster as a cofactor.

It is found in the cytoplasm. The enzyme catalyses A + NH4(+) + H2O = hydroxylamine + AH2 + H(+). Catalyzes the reduction of hydroxylamine to form NH(3) and H(2)O. The protein is Hydroxylamine reductase of Burkholderia ambifaria (strain MC40-6).